Here is a 184-residue protein sequence, read N- to C-terminus: ATP synthase subunit b, chloroplastic (184 aa).

The helical transmembrane segment at 27–49 threads the bilayer; sequence LATNLINLSVVLGVLIFFGKGVL.

It belongs to the ATPase B chain family. As to quaternary structure, F-type ATPases have 2 components, F(1) - the catalytic core - and F(0) - the membrane proton channel. F(1) has five subunits: alpha(3), beta(3), gamma(1), delta(1), epsilon(1). F(0) has four main subunits: a(1), b(1), b'(1) and c(10-14). The alpha and beta chains form an alternating ring which encloses part of the gamma chain. F(1) is attached to F(0) by a central stalk formed by the gamma and epsilon chains, while a peripheral stalk is formed by the delta, b and b' chains.

The protein resides in the plastid. It is found in the chloroplast thylakoid membrane. Functionally, f(1)F(0) ATP synthase produces ATP from ADP in the presence of a proton or sodium gradient. F-type ATPases consist of two structural domains, F(1) containing the extramembraneous catalytic core and F(0) containing the membrane proton channel, linked together by a central stalk and a peripheral stalk. During catalysis, ATP synthesis in the catalytic domain of F(1) is coupled via a rotary mechanism of the central stalk subunits to proton translocation. Its function is as follows. Component of the F(0) channel, it forms part of the peripheral stalk, linking F(1) to F(0). This Nymphaea alba (White water-lily) protein is ATP synthase subunit b, chloroplastic.